The following is a 120-amino-acid chain: Late cornified envelope-like proline-rich protein 1 (120 aa).

It belongs to the cornifin (SPRR) family.

In Mus musculus (Mouse), this protein is Late cornified envelope-like proline-rich protein 1 (Lelp1).